The primary structure comprises 115 residues: Ribosome-binding factor A (115 aa).

This sequence belongs to the RbfA family. As to quaternary structure, monomer. Binds 30S ribosomal subunits, but not 50S ribosomal subunits or 70S ribosomes.

The protein localises to the cytoplasm. In terms of biological role, one of several proteins that assist in the late maturation steps of the functional core of the 30S ribosomal subunit. Associates with free 30S ribosomal subunits (but not with 30S subunits that are part of 70S ribosomes or polysomes). Required for efficient processing of 16S rRNA. May interact with the 5'-terminal helix region of 16S rRNA. This is Ribosome-binding factor A from Streptococcus gordonii (strain Challis / ATCC 35105 / BCRC 15272 / CH1 / DL1 / V288).